The chain runs to 188 residues: Ion-translocating oxidoreductase complex subunit B (188 aa).

The tract at residues 1 to 23 (MIEAAVSMSALGLGLGLLLGVAA) is hydrophobic. The 4Fe-4S domain occupies 29–88 (ESPPILDAIEGILPGTNCGACGYPGCRGLAEAMSEGAAPVTACAPGGRDVALALAAIVET). Cysteine 46, cysteine 49, cysteine 54, cysteine 71, cysteine 113, cysteine 116, cysteine 119, cysteine 123, cysteine 143, cysteine 146, cysteine 149, and cysteine 153 together coordinate [4Fe-4S] cluster. 2 consecutive 4Fe-4S ferredoxin-type domains span residues 104–133 (TVAF…GANR) and 134–163 (QIHT…ARVK).

Belongs to the 4Fe4S bacterial-type ferredoxin family. RnfB subfamily. As to quaternary structure, the complex is composed of six subunits: RnfA, RnfB, RnfC, RnfD, RnfE and RnfG. The cofactor is [4Fe-4S] cluster.

The protein resides in the cellular chromatophore membrane. In terms of biological role, part of a membrane-bound complex that couples electron transfer with translocation of ions across the membrane. This Cereibacter sphaeroides (strain ATCC 17029 / ATH 2.4.9) (Rhodobacter sphaeroides) protein is Ion-translocating oxidoreductase complex subunit B.